Here is a 248-residue protein sequence, read N- to C-terminus: Probable transcriptional regulatory protein blr1534 (248 aa).

The interval 1-21 (MAGHSQFKNIMHRKGRQDAQK) is disordered.

Belongs to the TACO1 family.

It is found in the cytoplasm. This chain is Probable transcriptional regulatory protein blr1534, found in Bradyrhizobium diazoefficiens (strain JCM 10833 / BCRC 13528 / IAM 13628 / NBRC 14792 / USDA 110).